Reading from the N-terminus, the 291-residue chain is Urease accessory protein UreD (291 aa).

This sequence belongs to the UreD family. UreD, UreF and UreG form a complex that acts as a GTP-hydrolysis-dependent molecular chaperone, activating the urease apoprotein by helping to assemble the nickel containing metallocenter of UreC. The UreE protein probably delivers the nickel.

It localises to the cytoplasm. Functionally, required for maturation of urease via the functional incorporation of the urease nickel metallocenter. This is Urease accessory protein UreD from Acinetobacter baumannii (strain ATCC 17978 / DSM 105126 / CIP 53.77 / LMG 1025 / NCDC KC755 / 5377).